Reading from the N-terminus, the 4660-residue chain is Low-density lipoprotein receptor-related protein 2 (4660 aa).

Positions 1–25 (MERGAAAAAWMLLLAIAACLEPVSS) are cleaved as a signal peptide. Over 26–4425 (QECGSGNFRC…LSRGIPPGTT (4400 aa)) the chain is Extracellular. 6 LDL-receptor class A domains span residues 27-63 (ECGSGNFRCDNGYCIPASWRCDGTRDCLDDTDEIGCP), 66-104 (SCESGLFLCPAEGTCIPSSWVCDEDKDCSDGADEQQNCA), 107-143 (TCSAQQMTCSNGQCIPSEYRCDHVSDCPDGSDERNCH), 141-180 (NCHYPTCDQLTCANGACYNTSQRCDQKVDCRDSSDEANCT), 182-218 (LCSQKEFECGSGECILRAYVCDHDNDCEDNSDERNCN), and 221-257 (TCGGHQFTCSNGQCINQNWVCDGDDDCQDSGDEDGCE). 18 disulfides stabilise this stretch: cysteine 28/cysteine 40, cysteine 35/cysteine 53, cysteine 47/cysteine 62, cysteine 67/cysteine 80, cysteine 74/cysteine 93, cysteine 87/cysteine 103, cysteine 108/cysteine 120, cysteine 115/cysteine 133, cysteine 127/cysteine 142, cysteine 142/cysteine 157, cysteine 152/cysteine 170, cysteine 164/cysteine 179, cysteine 183/cysteine 195, cysteine 190/cysteine 208, cysteine 202/cysteine 217, cysteine 222/cysteine 234, cysteine 229/cysteine 247, and cysteine 241/cysteine 256. Asparagine 159 and asparagine 178 each carry an N-linked (GlcNAc...) asparagine glycan. Asparagine 259 carries an N-linked (GlcNAc...) asparagine glycan. Positions 264–307 (RCYPREWACPGSGRCISIDKVCDGVPDCPEGDDENNVTSGRTCG) constitute an LDL-receptor class A 7 domain. Disulfide bonds link cysteine 265–cysteine 278, cysteine 272–cysteine 291, and cysteine 285–cysteine 306. 2 N-linked (GlcNAc...) asparagine glycosylation sites follow: asparagine 299 and asparagine 340. The EGF-like 1; calcium-binding domain occupies 347–382 (DFDDCQIWGICDQKCENRQGRHQCLCEEGYILERGQ). 2 disulfide bridges follow: cysteine 351–cysteine 361 and cysteine 357–cysteine 370. LDL-receptor class B repeat units follow at residues 435–477 (HRVF…DWIN), 478–520 (NKLY…DPTV), 521–567 (GYLF…DLVS), and 568–612 (KRVY…FEEH). Asparagine 462 carries an N-linked (GlcNAc...) asparagine glycan. N-linked (GlcNAc...) asparagine glycosylation is present at asparagine 657. LDL-receptor class B repeat units lie at residues 752 to 794 (STVF…DWIS), 795 to 836 (RNLY…HPTA), 837 to 880 (GYMF…DWSA), and 881 to 924 (SRLY…FKDN). N-linked (GlcNAc...) asparagine glycosylation is present at asparagine 865. An LDL-receptor class A 8 domain is found at 1024–1060 (QCGSLSFPCNNGKCVPSFFRCDGVDDCHDNSDEHQCG). 3 disulfides stabilise this stretch: cysteine 1025-cysteine 1037, cysteine 1032-cysteine 1050, and cysteine 1044-cysteine 1059. Asparagine 1063 carries N-linked (GlcNAc...) asparagine glycosylation. 7 consecutive LDL-receptor class A domains span residues 1065–1102 (TCSPSAFACVRGGQCIPGQWHCDRQNDCLDGSDEQNCP), 1109–1145 (TCPSTSFTCDNHVCIPKDWVCDTDNDCSDGSDEKNCQ), 1149–1185 (TCQPTQFRCPDHRCISPLYVCDGDKDCADGSDEAGCV), 1187–1224 (NCTSAQFKCADGSSCINSRYRCDGVYDCRDNSDEAGCP), 1230–1268 (MCHPDEFQCQGDGTCIPNTWECDGHPDCIHGSDEHTGCV), 1271–1307 (TCSPTHFLCDNGNCIYKAWICDGDNDCRDMSDEKDCP), and 1312–1350 (HCPSTQWQCPGYSTCINLSALCDGVFDCPNGTDESPLCN). 9 disulfide bridges follow: cysteine 1066/cysteine 1079, cysteine 1073/cysteine 1092, cysteine 1086/cysteine 1101, cysteine 1110/cysteine 1122, cysteine 1117/cysteine 1135, cysteine 1129/cysteine 1144, cysteine 1150/cysteine 1162, cysteine 1157/cysteine 1175, and cysteine 1169/cysteine 1184. Residues tryptophan 1127, aspartate 1130, aspartate 1132, aspartate 1134, aspartate 1140, and glutamate 1141 each contribute to the Ca(2+) site. N-linked (GlcNAc...) asparagine glycosylation is present at asparagine 1187. 18 disulfides stabilise this stretch: cysteine 1188–cysteine 1201, cysteine 1195–cysteine 1214, cysteine 1208–cysteine 1223, cysteine 1231–cysteine 1244, cysteine 1238–cysteine 1257, cysteine 1251–cysteine 1267, cysteine 1272–cysteine 1284, cysteine 1279–cysteine 1297, cysteine 1291–cysteine 1306, cysteine 1313–cysteine 1326, cysteine 1320–cysteine 1339, cysteine 1333–cysteine 1349, cysteine 1354–cysteine 1365, cysteine 1361–cysteine 1374, cysteine 1376–cysteine 1389, cysteine 1395–cysteine 1405, cysteine 1401–cysteine 1414, and cysteine 1416–cysteine 1429. Ca(2+)-binding residues include tyrosine 1206, aspartate 1209, valine 1211, aspartate 1213, aspartate 1219, and glutamate 1220. N-linked (GlcNAc...) asparagine glycans are attached at residues asparagine 1328 and asparagine 1341. The 41-residue stretch at 1350 to 1390 (NQDSCSHFNGGCTHQCMQGPFGATCLCPLGYQLANDTKTCE) folds into the EGF-like 2 domain. An N-linked (GlcNAc...) asparagine glycan is attached at asparagine 1384. The region spanning 1391 to 1430 (DINECDIPGFCSQHCVNMRGSFRCACDPEYTLESDGRTCK) is the EGF-like 3; calcium-binding domain. Residues asparagine 1451, asparagine 1497, and asparagine 1551 are each glycosylated (N-linked (GlcNAc...) asparagine). LDL-receptor class B repeat units follow at residues 1479–1521 (GRVF…DWIG), 1522–1564 (RNLY…DPRM), 1567–1610 (NVMF…DYPN), 1611–1655 (RLIY…FEDF), and 1656–1696 (VYWT…IHPS). N-linked (GlcNAc...) asparagine glycans are attached at residues asparagine 1676, asparagine 1733, and asparagine 1811. 9 LDL-receptor class B repeats span residues 1791–1833 (QFIY…DWVS), 1834–1883 (RNIY…DPAR), 1884–1931 (GKLY…DIQE), 1932–1973 (QKLY…YGSF), 1974–2014 (LYYS…YHRR), 2108–2157 (GFIY…DWAA), 2158–2202 (GNLY…DPKH), 2203–2246 (RYLF…DHDT), and 2247–2290 (GYIY…FGES). N-linked (GlcNAc...) asparagine glycans are attached at residues asparagine 2134, asparagine 2178, and asparagine 2225. An N-linked (GlcNAc...) asparagine glycan is attached at asparagine 2396. LDL-receptor class B repeat units lie at residues 2432-2478 (NRIF…DWIN), 2479-2519 (RRIY…DPCR), 2520-2563 (GYMY…DLET), 2564-2605 (DLLY…YGQY), and 2606-2647 (IYWT…VVKT). N-linked (GlcNAc...) asparagine glycans are attached at residues asparagine 2488 and asparagine 2548. LDL-receptor class A domains are found at residues 2700–2738 (RCNQLQFTCLNGHCINQDWKCDNDNDCGDGSDELPTVCA), 2741–2777 (TCRSTAFTCGNGRCVPYHYRCDYYNDCGDNSDEAGCL), 2780–2819 (NCNSTTEFTCSNGRCIPLSYVCNGINNCHDNDTSDEKNCP), 2822–2861 (TCPPDFTKCQTTNICVPRAFLCDGDNDCGDGSDENPIYCA), 2864–2902 (TCRSNEFQCLSPQRCIPSYWFCDGEADCADGSDEPDTCG), 2907–2946 (TCRASQFQCDNGRCISGNWVCDGDNDCGDMSDEDQRHHCE), 2949–2991 (NCSS…QNCT), 2994–3030 (TCSAGEFSCANGRCVRQSFRCDRRNDCGDYSDERGCS), 3033–3071 (PCHANQFTCQNGRCIPRFFVCDEDNDCGDGSDEQEHLCH), and 3076–3112 (TCPLHQFRCDNGHCIEMGRVCNHVDDCSDNSDEKGCG). Disulfide bonds link cysteine 2701–cysteine 2713, cysteine 2708–cysteine 2726, cysteine 2720–cysteine 2737, cysteine 2742–cysteine 2754, cysteine 2749–cysteine 2767, cysteine 2761–cysteine 2776, cysteine 2781–cysteine 2794, cysteine 2789–cysteine 2807, cysteine 2801–cysteine 2818, cysteine 2823–cysteine 2836, cysteine 2830–cysteine 2849, cysteine 2843–cysteine 2860, cysteine 2865–cysteine 2878, cysteine 2872–cysteine 2891, cysteine 2885–cysteine 2901, cysteine 2908–cysteine 2920, cysteine 2915–cysteine 2933, and cysteine 2927–cysteine 2945. N-linked (GlcNAc...) asparagine glycosylation occurs at asparagine 2782. N-linked (GlcNAc...) asparagine glycosylation is present at asparagine 2810. A glycan (N-linked (GlcNAc...) asparagine) is linked at asparagine 2949. 18 disulfide bridges follow: cysteine 2950–cysteine 2967, cysteine 2957–cysteine 2980, cysteine 2974–cysteine 2990, cysteine 2995–cysteine 3007, cysteine 3002–cysteine 3020, cysteine 3014–cysteine 3029, cysteine 3034–cysteine 3046, cysteine 3041–cysteine 3059, cysteine 3053–cysteine 3070, cysteine 3077–cysteine 3089, cysteine 3084–cysteine 3102, cysteine 3096–cysteine 3111, cysteine 3116–cysteine 3128, cysteine 3124–cysteine 3137, cysteine 3139–cysteine 3152, cysteine 3158–cysteine 3169, cysteine 3165–cysteine 3178, and cysteine 3180–cysteine 3193. Asparagine 2989 carries an N-linked (GlcNAc...) asparagine glycan. Residues 3112–3153 (GINECLDSSISRCDHNCTDTITSFYCSCLPGYKLMSDKRSCV) form the EGF-like 4 domain. A glycan (N-linked (GlcNAc...) asparagine) is linked at asparagine 3127. The EGF-like 5; calcium-binding domain maps to 3154-3194 (DIDECKESPQLCSQKCENVVGSYICKCAPGYIREPDGKSCR). Residues asparagine 3213, asparagine 3259, asparagine 3317, and asparagine 3357 are each glycosylated (N-linked (GlcNAc...) asparagine). 5 LDL-receptor class B repeats span residues 3241 to 3283 (KRLY…DWVS), 3284 to 3326 (RKLY…EHPR), 3335 to 3378 (GHVY…DYTN), 3379 to 3421 (DLLY…FEDT), and 3422 to 3462 (VFWT…YHPY). A glycan (N-linked (GlcNAc...) asparagine) is linked at asparagine 3448. LDL-receptor class A domains lie at 3513-3551 (MCSSTQFLCGNNEKCIPIWWKCDGQKDCSDGSDEPDLCP), 3554-3592 (FCRLGQFQCRDGNCTSPQALCNARQDCADGSDEDRVLCE), 3595-3633 (RCESNEWQCANKRCIPQSWQCDSVNDCLDNSDEDTSHCA), 3636-3674 (TCRPGQFKCNNGRCIPQSWKCDVDNDCGDYSDEPIDECT), 3679-3717 (NCDNHTEFSCKTNYRCIPQWAVCNGFDDCRDNSDEQGCE), 3720-3757 (PCHPSGDFRCANHHCIPLRWKCDGTDDCGDNSDEENCV), 3760-3796 (ECSESEFRCADQQCIPSRWVCDQENDCGDNSDERDCE), and 3799-3835 (TCHPEHFQCTSGHCVPKALACDGRADCLDASDESACP). 24 disulfides stabilise this stretch: cysteine 3514-cysteine 3527, cysteine 3521-cysteine 3540, cysteine 3534-cysteine 3550, cysteine 3555-cysteine 3567, cysteine 3562-cysteine 3580, cysteine 3574-cysteine 3591, cysteine 3596-cysteine 3608, cysteine 3603-cysteine 3621, cysteine 3615-cysteine 3632, cysteine 3637-cysteine 3649, cysteine 3644-cysteine 3662, cysteine 3656-cysteine 3673, cysteine 3680-cysteine 3694, cysteine 3688-cysteine 3707, cysteine 3701-cysteine 3716, cysteine 3721-cysteine 3734, cysteine 3729-cysteine 3747, cysteine 3741-cysteine 3756, cysteine 3761-cysteine 3773, cysteine 3768-cysteine 3786, cysteine 3780-cysteine 3795, cysteine 3800-cysteine 3812, cysteine 3807-cysteine 3825, and cysteine 3819-cysteine 3834. An N-linked (GlcNAc...) asparagine glycan is attached at asparagine 3566. An N-linked (GlcNAc...) asparagine glycan is attached at asparagine 3682. Asparagine 3840 carries an N-linked (GlcNAc...) asparagine glycan. LDL-receptor class A domains follow at residues 3843–3881 (YCPAAMFECKNHVCIQSFWICDGENDCVDGSDEEIHLCF), 3884–3923 (PCESPQRFRCDNSRCVYGHQLCNGVDDCGDGSDEKEEHCR), and 3929–3965 (PCTDTEYKCSNGNCISQHYVCDNVNDCGDLSDETGCN). Cystine bridges form between cysteine 3844–cysteine 3856, cysteine 3851–cysteine 3869, cysteine 3863–cysteine 3880, cysteine 3885–cysteine 3898, cysteine 3893–cysteine 3911, cysteine 3905–cysteine 3922, cysteine 3930–cysteine 3942, cysteine 3937–cysteine 3955, and cysteine 3949–cysteine 3964. One can recognise an EGF-like 6 domain in the interval 3968 to 4003 (DNRTCAENICEQNCTQLSSGGFICSCRPGFKPSTSD). 2 N-linked (GlcNAc...) asparagine glycosylation sites follow: asparagine 3969 and asparagine 3980. 5 disulfide bridges follow: cysteine 3972-cysteine 3981, cysteine 3977-cysteine 3991, cysteine 4013-cysteine 4023, cysteine 4019-cysteine 4032, and cysteine 4034-cysteine 4049. In terms of domain architecture, EGF-like 7; calcium-binding spans 4009–4050 (DINECEEFGICPQSCRNSKGSYECFCVDGFKSMSTHYGERCA). Asparagine 4070 carries an N-linked (GlcNAc...) asparagine glycan. LDL-receptor class B repeat units follow at residues 4156–4198 (RHIY…NPKL), 4199–4242 (GLMF…DYLN), and 4244–4285 (DRVY…FEDK). N-linked (GlcNAc...) asparagine glycosylation occurs at asparagine 4329. Residues 4379–4413 (MPPPCRCMHGGNCYFDENELPKCKCSSGYSGEYCE) enclose the EGF-like 8 domain. 3 disulfides stabilise this stretch: cysteine 4383/cysteine 4391, cysteine 4385/cysteine 4401, and cysteine 4403/cysteine 4412. Residues 4426–4446 (MAVLLTFVIVIIVGALVLVGL) traverse the membrane as a helical segment. Over 4447–4660 (FHYRKTGSLL…ANLVKEDSDV (214 aa)) the chain is Cytoplasmic. The SH3-binding motif lies at 4454–4463 (SLLPTLPKLP). The PxLPxI/L motif 1; mediates interaction with ANKRA2 motif lies at 4457-4462 (PTLPKL). The PxLPxI/L motif 2; mediates interaction with ANKRA2 motif lies at 4460–4465 (PKLPSL). Serine 4464 and serine 4467 each carry phosphoserine. Positions 4522–4527 (FENPMY) match the Endocytosis signal motif. Residues 4559–4582 (NYGRPIDPSEIVPEPKPASPGADE) form a disordered region. Residue serine 4577 is modified to Phosphoserine. The interaction with DAB2 stretch occupies residues 4597-4610 (QTTNFENPIYAEMD). The short motif at 4603-4606 (NPIY) is the NPXY motif element. The SH2-binding motif lies at 4606–4609 (YAEM). A disordered region spans residues 4617–4660 (VAVAPPPSPSLPAKASKRNLTPGYTATEDTFKDTANLVKEDSDV). Positions 4619-4630 (VAPPPSPSLPAK) match the SH3-binding motif. Position 4624 is a phosphoserine (serine 4624). A compositionally biased stretch (polar residues) spans 4634-4644 (RNLTPGYTATE). Threonine 4637 carries the post-translational modification Phosphothreonine. Phosphoserine is present on serine 4658.

It belongs to the LDLR family. In terms of assembly, binds plasminogen, extracellular matrix components, plasminogen activator-plasminogen activator inhibitor type I complex, apolipoprotein E-enriched beta-VLDL, lipoprotein lipase, lactoferrin, CLU/clusterin and calcium. Forms a multimeric complex together with LRPAP1. Interacts (via PxLPxI/L motif) with ANKRA2 (via ankyrin repeats). Interacts with LRP2BP. Interacts (via NPXY motif) with DAB2; the interaction is not affected by tyrosine phosphorylation of the NPXY motif. Interacts with MB. Interacts with BMP4. Interacts with the Sonic hedgehog protein N-product which is the active product of SHH. Interacts with CST3 in a calcium-dependent manner. Interacts with the vitamin-D binding protein GC/DBP. Interacts with sex hormone-binding protein SHBG. Interacts with angiotensin-2. Also interacts with angiotensin 1-7. Interacts with APOM. Interacts with selenoprotein SEPP1. Interacts with LEP. Interacts with ALB. Interacts with the antiapoptotic protein BIRC5/survivin. Interacts with matrix metalloproteinase MMP2 in complex with metalloproteinase inhibitor TIMP1. In neurons, forms a trimeric complex with APP and APPB1/FE65. Interacts with LDLRAP1/ARH; mediates trafficking of LRP2 to the endocytic recycling compartment. Does not interact with beta-amyloid protein 40 alone but interacts with the complex composed of beta-amyloid protein 40 and CLU/APOJ. Interacts with MDK. Post-translationally, a fraction undergoes proteolytic cleavage of the extracellular domain at the cell membrane to generate a cytoplasmic tail fragment. This is internalized into the early endosome from where it trafficks in an LDLRAP1/ARH-dependent manner to the endocytic recycling compartment (ERC). In the ERC, it is further cleaved by gamma-secretase to release a fragment which translocates to the nucleus and mediates transcriptional repression. N-glycosylation is required for ligand binding. In terms of tissue distribution, in the inner ear, expressed in the lumen of the endolymphatic sac where it localizes to macrophage-like cells as well as to mitochondria-rich and ribosome-rich epithelial cells (at protein level). In the inner ear, expressed in marginal cells of the stria vascularis, epithelial cells at the spiral prominence, epithelial cells of Reissner's membrane facing the cochlear duct, and Kolliker's organ (at protein level). Expressed in the choroid plexus epithelium in the brain (at protein level). In the brain, also expressed in astrocytes (at protein level). Expression also detected in epithelial cells of the kidney glomerulus and proximal tubule, lung, epididymis and yolk sac.

The protein localises to the apical cell membrane. It localises to the endosome lumen. The protein resides in the membrane. Its subcellular location is the clathrin-coated pit. It is found in the cell projection. The protein localises to the dendrite. It localises to the axon. Functionally, multiligand endocytic receptor. Acts together with CUBN to mediate endocytosis of high-density lipoproteins. Mediates receptor-mediated uptake of polybasic drugs such as aprotinin, aminoglycosides and polymyxin B. In the kidney, mediates the tubular uptake and clearance of leptin. Also mediates transport of leptin across the blood-brain barrier through endocytosis at the choroid plexus epithelium. Endocytosis of leptin in neuronal cells is required for hypothalamic leptin signaling and leptin-mediated regulation of feeding and body weight. Mediates endocytosis and subsequent lysosomal degradation of CST3 in kidney proximal tubule cells. Mediates renal uptake of 25-hydroxyvitamin D3 in complex with the vitamin D3 transporter GC/DBP. Mediates renal uptake of metallothionein-bound heavy metals. Together with CUBN, mediates renal reabsorption of myoglobin. Mediates renal uptake and subsequent lysosomal degradation of APOM. Plays a role in kidney selenium homeostasis by mediating renal endocytosis of selenoprotein SEPP1. Mediates renal uptake of the antiapoptotic protein BIRC5/survivin which may be important for functional integrity of the kidney. Mediates renal uptake of matrix metalloproteinase MMP2 in complex with metalloproteinase inhibitor TIMP1. Mediates endocytosis of Sonic hedgehog protein N-product (ShhN), the active product of SHH. Also mediates ShhN transcytosis. In the embryonic neuroepithelium, mediates endocytic uptake and degradation of BMP4, is required for correct SHH localization in the ventral neural tube and plays a role in patterning of the ventral telencephalon. Required at the onset of neurulation to sequester SHH on the apical surface of neuroepithelial cells of the rostral diencephalon ventral midline and to control PTCH1-dependent uptake and intracellular trafficking of SHH. During neurulation, required in neuroepithelial cells for uptake of folate bound to the folate receptor FOLR1 which is necessary for neural tube closure. In the adult brain, negatively regulates BMP signaling in the subependymal zone which enables neurogenesis to proceed. In astrocytes, mediates endocytosis of ALB which is required for the synthesis of the neurotrophic factor oleic acid. Involved in neurite branching. During optic nerve development, required for SHH-mediated migration and proliferation of oligodendrocyte precursor cells. Mediates endocytic uptake and clearance of SHH in the retinal margin which protects retinal progenitor cells from mitogenic stimuli and keeps them quiescent. Plays a role in reproductive organ development by mediating uptake in reproductive tissues of androgen and estrogen bound to the sex hormone binding protein SHBG. Mediates endocytosis of angiotensin-2. Also mediates endocytosis of angiotensin 1-7. Binds to the complex composed of beta-amyloid protein 40 and CLU/APOJ and mediates its endocytosis and lysosomal degradation. Required for embryonic heart development. Required for normal hearing, possibly through interaction with estrogen in the inner ear. This is Low-density lipoprotein receptor-related protein 2 (Lrp2) from Rattus norvegicus (Rat).